A 156-amino-acid chain; its full sequence is MDCAITKDVEDMLRKFDSNGDGNITFDEAVKRLKETGSKDPLRAASSMFISLDKDKDGIISIKEIHGHKADVAAKKLQKAINNICNNFLKGYDTDKDGRISWDEVCNWVNKNNPDAIAPLMIVENFFSELDKDNDRFVTKCELQEYVTKYKSLPEQ.

4 EF-hand domains span residues 4–39 (AITKDVEDMLRKFDSNGDGNITFDEAVKRLKETGSK), 40–75 (DPLRAASSMFISLDKDKDGIISIKEIHGHKADVAAK), 80–115 (AINNICNNFLKGYDTDKDGRISWDEVCNWVNKNNPD), and 118–153 (APLMIVENFFSELDKDNDRFVTKCELQEYVTKYKSL). Ca(2+) contacts are provided by D17, N19, D21, N23, E28, D53, D55, D57, E64, D93, D95, D97, R99, E104, D131, D133, D135, and E142.

The polypeptide is Calcium-binding protein A (cbpA) (Dictyostelium discoideum (Social amoeba)).